Consider the following 159-residue polypeptide: Transcription elongation factor GreA (159 aa).

The protein belongs to the GreA/GreB family.

Functionally, necessary for efficient RNA polymerase transcription elongation past template-encoded arresting sites. The arresting sites in DNA have the property of trapping a certain fraction of elongating RNA polymerases that pass through, resulting in locked ternary complexes. Cleavage of the nascent transcript by cleavage factors such as GreA or GreB allows the resumption of elongation from the new 3'terminus. GreA releases sequences of 2 to 3 nucleotides. This is Transcription elongation factor GreA from Psychromonas ingrahamii (strain DSM 17664 / CCUG 51855 / 37).